Reading from the N-terminus, the 160-residue chain is uncharacterized protein (160 aa).

This is an uncharacterized protein from Escherichia coli O157:H7.